The following is a 458-amino-acid chain: tRNA modification GTPase MnmE (458 aa).

(6S)-5-formyl-5,6,7,8-tetrahydrofolate contacts are provided by R26, E88, and R127. Positions 224 to 378 (GLSTAIIGRP…IEERINDIFF (155 aa)) constitute a TrmE-type G domain. Residue N234 participates in K(+) binding. GTP contacts are provided by residues 234–239 (NVGKSS), 253–259 (TDIEGTT), and 278–281 (DTAG). Residue S238 coordinates Mg(2+). K(+) contacts are provided by T253, I255, and T258. A Mg(2+)-binding site is contributed by T259. K458 is a binding site for (6S)-5-formyl-5,6,7,8-tetrahydrofolate.

The protein belongs to the TRAFAC class TrmE-Era-EngA-EngB-Septin-like GTPase superfamily. TrmE GTPase family. Homodimer. Heterotetramer of two MnmE and two MnmG subunits. Requires K(+) as cofactor.

The protein resides in the cytoplasm. Functionally, exhibits a very high intrinsic GTPase hydrolysis rate. Involved in the addition of a carboxymethylaminomethyl (cmnm) group at the wobble position (U34) of certain tRNAs, forming tRNA-cmnm(5)s(2)U34. The chain is tRNA modification GTPase MnmE from Streptococcus agalactiae serotype Ia (strain ATCC 27591 / A909 / CDC SS700).